The chain runs to 438 residues: GTPase Obg (438 aa).

Residues 2–160 (NMFVDQIKIE…HYLELELKML (159 aa)) enclose the Obg domain. Positions 161 to 337 (ADVGLIGFPS…LMQLTADLLD (177 aa)) constitute an OBG-type G domain. GTP is bound by residues 167 to 174 (GFPSVGKS), 192 to 196 (FTTLT), 214 to 217 (DMPG), 284 to 287 (TKMD), and 318 to 320 (SAV). 2 residues coordinate Mg(2+): serine 174 and threonine 194. The OCT domain maps to 360-438 (PDKKDEADFT…IEKFVFEFIQ (79 aa)).

This sequence belongs to the TRAFAC class OBG-HflX-like GTPase superfamily. OBG GTPase family. Monomer. It depends on Mg(2+) as a cofactor.

The protein resides in the cytoplasm. Functionally, an essential GTPase which binds GTP, GDP and possibly (p)ppGpp with moderate affinity, with high nucleotide exchange rates and a fairly low GTP hydrolysis rate. Plays a role in control of the cell cycle, stress response, ribosome biogenesis and in those bacteria that undergo differentiation, in morphogenesis control. The chain is GTPase Obg from Limosilactobacillus reuteri (strain DSM 20016) (Lactobacillus reuteri).